We begin with the raw amino-acid sequence, 3970 residues long: Polyketide synthase-nonribosomal peptide synthetase hybrid himA (3970 aa).

The Ketosynthase family 3 (KS3) domain maps to 8–443; the sequence is SEPIAIIGSA…GTNSHAILES (436 aa). Active-site for beta-ketoacyl synthase activity residues include cysteine 181, histidine 320, and histidine 363. The segment at 561-876 is malonyl-CoA:ACP transacylase (MAT) domain; the sequence is IFTGQGAQWP…PYAGLLHRGR (316 aa). Residues 949-1083 form an N-terminal hotdog fold region; sequence HELLGVRTSD…GMVHLHLGEP (135 aa). The dehydratase (DH) domain stretch occupies residues 949–1253; it reads HELLGVRTSD…GLTVVALSST (305 aa). The region spanning 949–1256 is the PKS/mFAS DH domain; it reads HELLGVRTSD…VVALSSTGPA (308 aa). The active-site Proton acceptor; for dehydratase activity is the histidine 981. Residues 1098–1256 form a C-terminal hotdog fold region; that stretch reads GLNRVDLDEF…VVALSSTGPA (159 aa). The active-site Proton donor; for dehydratase activity is aspartate 1158. Residues 2060-2234 form a ketoreductase (KR) domain region; the sequence is TYVMIGLTGE…ASVLDIGMVS (175 aa). A Carrier 1 domain is found at 2342-2419; that stretch reads AIAAILTESF…TLAEEVAKEL (78 aa). Serine 2379 is modified (O-(pantetheine 4'-phosphoryl)serine). The disordered stretch occupies residues 2420–2482; it reads FEDRSTSAPP…NDDSDPTAQC (63 aa). The segment covering 2445 to 2466 has biased composition (low complexity); it reads GSSTDPSSNSDSKSGFDGFSSD. Positions 2467–2477 are enriched in acidic residues; that stretch reads DSSDIANDDSD. The interval 2487 to 2919 is condensation (C) domain; that stretch reads PMSLSQARMW…ATTPTERVAT (433 aa). The adenylation (A) domain stretch occupies residues 2974 to 3381; sequence SYKAMSDRVN…LGDIANAILK (408 aa). The interval 3466 to 3495 is disordered; the sequence is RPLPASGDEDGDEDTETETGADADADAGAD. Residues 3472–3492 are compositionally biased toward acidic residues; it reads GDEDGDEDTETETGADADADA. Residues 3496 to 3574 form the Carrier 2 domain; the sequence is TTLSDIHSKL…AIAERILRGV (79 aa). Position 3534 is an O-(pantetheine 4'-phosphoryl)serine (serine 3534). Residues 3633 to 3866 are reductase (R) domain; the sequence is LTGATGFLGR…FIRVETVAEE (234 aa).

The protein in the C-terminal section; belongs to the NRP synthetase family.

The protein operates within secondary metabolite biosynthesis. Polyketide synthase-nonribosomal peptide synthetase hybrid; part of the him gene cluster that mediates the biosynthesis of himeic acid A, a ubiquitin-activating enzyme (E1) inhibitor. First, himA, together with the trans-enoyl reductase himH, catalyzes the formation of apolyketide chain, which is then condensed with leucine by the NRPS activity of himA. Dieckmann cyclization and release from himA gives a tetramic acid intermediate as the product of himA PKS-NRPS. HimG then catalyzes alpha-oxidation of the tetramic acid ring, with a subsequent rearrangement to yield apyrone intermediate. Two terminal methyl groups of polyketide and amide side chains are oxidized to carboxylic acids by himC cytochrome P450 monooxygenase to form himeic acid A. Himeic acid A is further converted to himeic acids B and C during culture growth. No gene responsible for pyrone to pyridone conversion was found in the him gene cluster and himeic acid A is non-enzymatically converted to himeic acid C by the incorporation of an ammonium nitrogen atom in a pH5 buffer, and to himeic acid B at a conversion ratio of 50% during incubation in MeOH for 5 days. In Aspergillus japonicus, this protein is Polyketide synthase-nonribosomal peptide synthetase hybrid himA.